The following is a 444-amino-acid chain: Phosphoribosylamine--glycine ligase (444 aa).

One can recognise an ATP-grasp domain in the interval 109 to 324 (RNLFKKYNIK…FLEVCEAIVN (216 aa)). 140–202 (LTEKGIKAVV…EEKLEGVEFT (63 aa)) contacts ATP. Glutamine 282, glutamate 294, and asparagine 296 together coordinate Mg(2+). Mn(2+) is bound by residues glutamine 282, glutamate 294, and asparagine 296.

Belongs to the GARS family. It depends on Mg(2+) as a cofactor. Requires Mn(2+) as cofactor.

The enzyme catalyses 5-phospho-beta-D-ribosylamine + glycine + ATP = N(1)-(5-phospho-beta-D-ribosyl)glycinamide + ADP + phosphate + H(+). It participates in purine metabolism; IMP biosynthesis via de novo pathway; N(1)-(5-phospho-D-ribosyl)glycinamide from 5-phospho-alpha-D-ribose 1-diphosphate: step 2/2. In Methanocaldococcus jannaschii (strain ATCC 43067 / DSM 2661 / JAL-1 / JCM 10045 / NBRC 100440) (Methanococcus jannaschii), this protein is Phosphoribosylamine--glycine ligase.